Consider the following 759-residue polypeptide: Protein YdeP (759 aa).

2 residues coordinate [4Fe-4S] cluster: cysteine 49 and cysteine 52.

It belongs to the prokaryotic molybdopterin-containing oxidoreductase family. It depends on [4Fe-4S] cluster as a cofactor. The cofactor is Mo-bis(molybdopterin guanine dinucleotide).

In terms of biological role, probably involved in acid resistance. This Escherichia coli O6:H1 (strain CFT073 / ATCC 700928 / UPEC) protein is Protein YdeP (ydeP).